The chain runs to 411 residues: Histidine--tRNA ligase (411 aa).

This sequence belongs to the class-II aminoacyl-tRNA synthetase family. Homodimer.

Its subcellular location is the cytoplasm. It carries out the reaction tRNA(His) + L-histidine + ATP = L-histidyl-tRNA(His) + AMP + diphosphate + H(+). The chain is Histidine--tRNA ligase from Dictyoglomus turgidum (strain DSM 6724 / Z-1310).